The chain runs to 1349 residues: Spike glycoprotein (1349 aa).

An N-terminal signal peptide occupies residues Met-1 to Phe-13. Topologically, residues Ala-14–Pro-1293 are extracellular. One can recognise a BetaCoV S1-NTD domain in the interval Val-15 to Thr-298. Intrachain disulfides connect Cys-21-Cys-165, Cys-160-Cys-193, Cys-172-Cys-252, Cys-286-Cys-296, Cys-331-Cys-356, Cys-374-Cys-427, and Cys-386-Cys-601. N-linked (GlcNAc...) asparagine; by host glycans are attached at residues Asn-22, Asn-59, and Asn-133. An N-linked (GlcNAc...) asparagine; by host glycan is attached at Asn-198. The region spanning Pro-329 to Thr-603 is the BetaCoV S1-CTD domain. N-linked (GlcNAc...) asparagine; by host glycans are attached at residues Asn-437, Asn-456, Asn-512, Asn-611, Asn-635, Asn-662, Asn-682, Asn-700, Asn-725, Asn-774, and Asn-881. 2 fusion peptide regions span residues Ser-900–Tyr-921 and Gln-919–Tyr-939. Asn-923 is a glycosylation site (N-linked (GlcNAc...) asparagine; by host). Cys-924 and Cys-935 are oxidised to a cystine. The interval Gln-1000–Phe-1050 is heptad repeat 1. Residues Gln-1029–Ile-1073 are a coiled coil. Asn-1180, Asn-1210, Asn-1220, Asn-1239, Asn-1253, and Asn-1274 each carry an N-linked (GlcNAc...) asparagine; by host glycan. The heptad repeat 2 stretch occupies residues Ala-1244–Asp-1282. A coiled-coil region spans residues Thr-1255–Ile-1283. The helical transmembrane segment at Trp-1294–Ile-1314 threads the bilayer. Topologically, residues Cys-1315–Asp-1349 are cytoplasmic. The KxHxx motif lies at Thr-1345–Asp-1349.

The protein belongs to the betacoronaviruses spike protein family. Homotrimer; each monomer consists of a S1 and a S2 subunit. The resulting peplomers protrude from the virus surface as spikes. Post-translationally, specific enzymatic cleavages in vivo yield mature proteins. The precursor is processed into S1 and S2 by host cell furin or another cellular protease to yield the mature S1 and S2 proteins. Additionally, a second cleavage leads to the release of a fusion peptide after viral attachment to host cell receptor. In terms of processing, the cytoplasmic Cys-rich domain is palmitoylated. Spike glycoprotein is digested within host endosomes.

The protein localises to the virion membrane. It is found in the host endoplasmic reticulum-Golgi intermediate compartment membrane. The protein resides in the host cell membrane. In terms of biological role, attaches the virion to the cell membrane by interacting with host receptor, initiating the infection. Mediates fusion of the virion and cellular membranes by acting as a class I viral fusion protein. Under the current model, the protein has at least three conformational states: pre-fusion native state, pre-hairpin intermediate state, and post-fusion hairpin state. During viral and target cell membrane fusion, the coiled coil regions (heptad repeats) assume a trimer-of-hairpins structure, positioning the fusion peptide in close proximity to the C-terminal region of the ectodomain. The formation of this structure appears to drive apposition and subsequent fusion of viral and target cell membranes. Functionally, acts as a viral fusion peptide which is unmasked following S2 cleavage occurring upon virus endocytosis. The chain is Spike glycoprotein from Porcine hemagglutinating encephalomyelitis virus (strain IAF-404) (HEV).